The primary structure comprises 250 residues: NAD(P)H-quinone oxidoreductase subunit K (250 aa).

[4Fe-4S] cluster is bound by residues C63, C64, C128, and C159.

Belongs to the complex I 20 kDa subunit family. In terms of assembly, NDH-1 can be composed of about 15 different subunits; different subcomplexes with different compositions have been identified which probably have different functions. [4Fe-4S] cluster is required as a cofactor.

The protein resides in the cellular thylakoid membrane. The catalysed reaction is a plastoquinone + NADH + (n+1) H(+)(in) = a plastoquinol + NAD(+) + n H(+)(out). It carries out the reaction a plastoquinone + NADPH + (n+1) H(+)(in) = a plastoquinol + NADP(+) + n H(+)(out). NDH-1 shuttles electrons from an unknown electron donor, via FMN and iron-sulfur (Fe-S) centers, to quinones in the respiratory and/or the photosynthetic chain. The immediate electron acceptor for the enzyme in this species is believed to be plastoquinone. Couples the redox reaction to proton translocation, and thus conserves the redox energy in a proton gradient. Cyanobacterial NDH-1 also plays a role in inorganic carbon-concentration. The protein is NAD(P)H-quinone oxidoreductase subunit K of Rippkaea orientalis (strain PCC 8801 / RF-1) (Cyanothece sp. (strain PCC 8801)).